The primary structure comprises 631 residues: 1-deoxy-D-xylulose-5-phosphate synthase (631 aa).

Thiamine diphosphate is bound by residues His-78 and 119-121 (AHS). Asp-150 lines the Mg(2+) pocket. Thiamine diphosphate-binding positions include 151-152 (GA), Asn-179, Tyr-286, and Glu-368. Asn-179 lines the Mg(2+) pocket.

The protein belongs to the transketolase family. DXPS subfamily. In terms of assembly, homodimer. Mg(2+) serves as cofactor. Thiamine diphosphate is required as a cofactor.

It catalyses the reaction D-glyceraldehyde 3-phosphate + pyruvate + H(+) = 1-deoxy-D-xylulose 5-phosphate + CO2. It functions in the pathway metabolic intermediate biosynthesis; 1-deoxy-D-xylulose 5-phosphate biosynthesis; 1-deoxy-D-xylulose 5-phosphate from D-glyceraldehyde 3-phosphate and pyruvate: step 1/1. Its function is as follows. Catalyzes the acyloin condensation reaction between C atoms 2 and 3 of pyruvate and glyceraldehyde 3-phosphate to yield 1-deoxy-D-xylulose-5-phosphate (DXP). The chain is 1-deoxy-D-xylulose-5-phosphate synthase from Verminephrobacter eiseniae (strain EF01-2).